The following is a 130-amino-acid chain: Protein ApaG (130 aa).

One can recognise an ApaG domain in the interval 3-127 (RALTKDIEVV…FSLDSPGLLR (125 aa)).

This Rhizobium leguminosarum bv. trifolii (strain WSM2304) protein is Protein ApaG.